The sequence spans 501 residues: Cytochrome P450 7A1 (501 aa).

The chain crosses the membrane as a helical span at residues 4–24 (ISLLGGIVTAVCCCLWLLLGM). Cys441 contacts heme.

The protein belongs to the cytochrome P450 family. Heme is required as a cofactor.

Its subcellular location is the endoplasmic reticulum membrane. The protein localises to the microsome membrane. It carries out the reaction cholesterol + reduced [NADPH--hemoprotein reductase] + O2 = 7alpha-hydroxycholesterol + oxidized [NADPH--hemoprotein reductase] + H2O + H(+). The enzyme catalyses 4beta-hydroxycholesterol + reduced [NADPH--hemoprotein reductase] + O2 = 4beta,7alpha-dihydroxycholesterol + oxidized [NADPH--hemoprotein reductase] + H2O + H(+). It catalyses the reaction lathosterol + reduced [NADPH--hemoprotein reductase] + O2 = 7alpha,8alpha-epoxy-5alpha-cholestan-3beta-ol + oxidized [NADPH--hemoprotein reductase] + H2O + H(+). The catalysed reaction is lathosterol + reduced [NADPH--hemoprotein reductase] + O2 = 5alpha-cholestan-7-oxo-3beta-ol + oxidized [NADPH--hemoprotein reductase] + H2O + H(+). It carries out the reaction 7-dehydrocholesterol + reduced [NADPH--hemoprotein reductase] + O2 = 7-oxocholesterol + oxidized [NADPH--hemoprotein reductase] + H2O + H(+). The enzyme catalyses (24S)-hydroxycholesterol + reduced [NADPH--hemoprotein reductase] + O2 = (24S)-7alpha-dihydroxycholesterol + oxidized [NADPH--hemoprotein reductase] + H2O + H(+). It catalyses the reaction (24R)-hydroxycholesterol + reduced [NADPH--hemoprotein reductase] + O2 = (24R)-7alpha-dihydroxycholesterol + oxidized [NADPH--hemoprotein reductase] + H2O + H(+). It functions in the pathway lipid metabolism; bile acid biosynthesis. Its pathway is steroid metabolism; cholesterol degradation. In terms of biological role, a cytochrome P450 monooxygenase involved in the metabolism of endogenous cholesterol and its oxygenated derivatives (oxysterols). Mechanistically, uses molecular oxygen inserting one oxygen atom into a substrate, and reducing the second into a water molecule, with two electrons provided by NADPH via cytochrome P450 reductase (CPR; NADPH-ferrihemoprotein reductase). Functions as a critical regulatory enzyme of bile acid biosynthesis and cholesterol homeostasis. Catalyzes the hydroxylation of carbon hydrogen bond at 7-alpha position of cholesterol, a rate-limiting step in cholesterol catabolism and bile acid biosynthesis. 7-alpha hydroxylates several oxysterols, including 4beta-hydroxycholesterol and 24-hydroxycholesterol. Catalyzes the oxidation of the 7,8 double bond of 7-dehydrocholesterol and lathosterol with direct and predominant formation of the 7-keto derivatives. The polypeptide is Cytochrome P450 7A1 (CYP7A1) (Sus scrofa (Pig)).